We begin with the raw amino-acid sequence, 332 residues long: Putative potassium channel regulatory protein sup-10 (332 aa).

A signal peptide spans 1 to 18 (MRYAVFIFLIVLIDLIYC). Topologically, residues 19 to 301 (WNSKRSFFIP…EISERNKRPA (283 aa)) are extracellular. N-linked (GlcNAc...) asparagine glycosylation is found at asparagine 61, asparagine 107, and asparagine 166. Residues 302-322 (FVLVGLTGGIAVIILAFSIFW) form a helical membrane-spanning segment. At 323 to 332 (GLNGSGFNKD) the chain is on the cytoplasmic side.

As to quaternary structure, may form a complex with sup-9 and unc-93 where sup-10 and unc-93 act as regulatory subunits of the two pore potassium channel sup-9. Sup-10 may regulate sup-9 via sup-18. In terms of tissue distribution, low levels in body-wall muscles, eight vulval muscles, intestinal muscles and anal depressor muscle.

The protein resides in the membrane. May contribute to coordination of muscle contraction as regulatory subunit of a nonessential potassium channel complex. This Caenorhabditis elegans protein is Putative potassium channel regulatory protein sup-10.